A 366-amino-acid chain; its full sequence is Tetraacyldisaccharide 4'-kinase (366 aa).

62 to 69 (RVGGTGKT) is an ATP binding site.

This sequence belongs to the LpxK family.

It catalyses the reaction a lipid A disaccharide + ATP = a lipid IVA + ADP + H(+). The protein operates within glycolipid biosynthesis; lipid IV(A) biosynthesis; lipid IV(A) from (3R)-3-hydroxytetradecanoyl-[acyl-carrier-protein] and UDP-N-acetyl-alpha-D-glucosamine: step 6/6. Its function is as follows. Transfers the gamma-phosphate of ATP to the 4'-position of a tetraacyldisaccharide 1-phosphate intermediate (termed DS-1-P) to form tetraacyldisaccharide 1,4'-bis-phosphate (lipid IVA). The polypeptide is Tetraacyldisaccharide 4'-kinase (Polynucleobacter necessarius subsp. necessarius (strain STIR1)).